Reading from the N-terminus, the 207-residue chain is Inhibitor of hydrogen peroxide resistance (207 aa).

The H-T-H motif DNA-binding region spans 163–182 (MNYIHQRTRVSRSVVAEVLA).

This sequence belongs to the IprA family.

Involved in oxidative stress resistance. This chain is Inhibitor of hydrogen peroxide resistance, found in Salmonella typhimurium (strain LT2 / SGSC1412 / ATCC 700720).